Here is an 825-residue protein sequence, read N- to C-terminus: BEN domain-containing protein 3 (825 aa).

Residues 1–11 (MNSTEISEDVE) show a composition bias toward acidic residues. The tract at residues 1–35 (MNSTEISEDVEEVLKNNPVKAEGSDATLDCSRNSR) is disordered. A Glycyl lysine isopeptide (Lys-Gly) (interchain with G-Cter in SUMO); alternate cross-link involves residue K20. A Glycyl lysine isopeptide (Lys-Gly) (interchain with G-Cter in SUMO1); alternate cross-link involves residue K20. K20 is covalently cross-linked (Glycyl lysine isopeptide (Lys-Gly) (interchain with G-Cter in SUMO2); alternate). Glycyl lysine isopeptide (Lys-Gly) (interchain with G-Cter in SUMO2) cross-links involve residues K39, K54, K56, K71, K126, K127, K135, K140, K156, and K174. The disordered stretch occupies residues 52-122 (SSKRKQLDSD…EEEPSTEATV (71 aa)). The Nuclear localization signal signature appears at 54-56 (KRK). The BEN 1 domain maps to 239 to 340 (PPPEYQLTAS…DFFSRFWAQR (102 aa)). S376 bears the Phosphoserine mark. In terms of domain architecture, BEN 2 spans 384 to 484 (ASDHVVDTQD…DELEGLGLEG (101 aa)). Residue K424 forms a Glycyl lysine isopeptide (Lys-Gly) (interchain with G-Cter in SUMO2) linkage. S486 bears the Phosphoserine mark. K509 is covalently cross-linked (Glycyl lysine isopeptide (Lys-Gly) (interchain with G-Cter in SUMO); alternate). K509 is covalently cross-linked (Glycyl lysine isopeptide (Lys-Gly) (interchain with G-Cter in SUMO2); alternate). Residue K525 forms a Glycyl lysine isopeptide (Lys-Gly) (interchain with G-Cter in SUMO2) linkage. Residues 547 to 647 (GSDCLLSKEQ…ERCRRRDTEQ (101 aa)) enclose the BEN 3 domain. Residue K697 forms a Glycyl lysine isopeptide (Lys-Gly) (interchain with G-Cter in SUMO2) linkage. In terms of domain architecture, BEN 4 spans 712 to 813 (VPSPYLLSDK…ERCRRPNRKK (102 aa)).

In terms of assembly, homooligomer, probably a homooctamer. Interacts with HDAC2 and HDAC3, but not HDAC1. Interacts with SALL4. Interacts with SMARCA5/SNF2H, BAZ2A/TIP5 and USP21. Interacts with the nucleosome remodeling and histone deacetylase (NuRD) repressor complex. Interacts (via BEN domains 1 and 3) with ERCC6L (via N-terminal TPR repeat); the interaction is direct. Post-translationally, sumoylated at Lys-20 by SUMO1 and at Lys-509 by SUMO1, SUMO2 and SUMO3. Sumoylation probably occurs sequentially, with that of Lys-20 preceding that of Lys-509. It does not alter association with heterochromatin, but is required for the repression of transcription.

The protein localises to the nucleus. Its subcellular location is the nucleolus. Functionally, transcriptional repressor which associates with the NoRC (nucleolar remodeling complex) complex and plays a key role in repressing rDNA transcription. The sumoylated form modulates the stability of the NoRC complex component BAZ2A/TIP5 by controlling its USP21-mediated deubiquitination. Binds to unmethylated major satellite DNA and is involved in the recruitment of the Polycomb repressive complex 2 (PRC2) to major satellites. Stimulates the ERCC6L translocase and ATPase activities. This chain is BEN domain-containing protein 3 (Bend3), found in Mus musculus (Mouse).